A 65-amino-acid chain; its full sequence is Large ribosomal subunit protein bL35 (65 aa).

Basic residues-rich tracts occupy residues 1–11 and 21–43; these read MPKIKTRRSAA and KFKRRRQNLRHILTKKAASRKMR. Positions 1–65 are disordered; it reads MPKIKTRRSA…KAVRRMLPNG (65 aa).

It belongs to the bacterial ribosomal protein bL35 family.

The protein is Large ribosomal subunit protein bL35 of Desulfovibrio desulfuricans (strain ATCC 27774 / DSM 6949 / MB).